The chain runs to 416 residues: ATP-dependent Clp protease ATP-binding subunit ClpX (416 aa).

In terms of domain architecture, ClpX-type ZB spans 1 to 54 (MFKFGDEKGQLKCSFCGKSQEQVRKLVAGPGVYICDECIELCNEIIEEELNDDV). Positions 13, 16, 35, and 38 each coordinate Zn(2+). 117–124 (PTGCGKTL) serves as a coordination point for ATP.

The protein belongs to the ClpX chaperone family. As to quaternary structure, component of the ClpX-ClpP complex. Forms a hexameric ring that, in the presence of ATP, binds to fourteen ClpP subunits assembled into a disk-like structure with a central cavity, resembling the structure of eukaryotic proteasomes.

In terms of biological role, ATP-dependent specificity component of the Clp protease. It directs the protease to specific substrates. Can perform chaperone functions in the absence of ClpP. The polypeptide is ATP-dependent Clp protease ATP-binding subunit ClpX (Halothermothrix orenii (strain H 168 / OCM 544 / DSM 9562)).